The following is a 320-amino-acid chain: ATP-dependent 6-phosphofructokinase (320 aa).

ATP-binding positions include Gly11, 72–73 (RY), and 102–105 (GDGS). Asp103 contacts Mg(2+). Residues 125–127 (TID), Arg162, 169–171 (MGR), Glu222, Arg243, and 249–252 (HMQR) each bind substrate. Asp127 functions as the Proton acceptor in the catalytic mechanism.

This sequence belongs to the phosphofructokinase type A (PFKA) family. ATP-dependent PFK group I subfamily. Prokaryotic clade 'B1' sub-subfamily. As to quaternary structure, homotetramer. Mg(2+) is required as a cofactor.

It localises to the cytoplasm. It catalyses the reaction beta-D-fructose 6-phosphate + ATP = beta-D-fructose 1,6-bisphosphate + ADP + H(+). It functions in the pathway carbohydrate degradation; glycolysis; D-glyceraldehyde 3-phosphate and glycerone phosphate from D-glucose: step 3/4. Its activity is regulated as follows. Allosterically activated by ADP and other diphosphonucleosides, and allosterically inhibited by phosphoenolpyruvate. In terms of biological role, catalyzes the phosphorylation of D-fructose 6-phosphate to fructose 1,6-bisphosphate by ATP, the first committing step of glycolysis. The sequence is that of ATP-dependent 6-phosphofructokinase from Lactiplantibacillus plantarum (strain ATCC BAA-793 / NCIMB 8826 / WCFS1) (Lactobacillus plantarum).